A 92-amino-acid chain; its full sequence is Small ribosomal subunit protein uS19c (92 aa).

The protein belongs to the universal ribosomal protein uS19 family.

Its subcellular location is the plastid. The protein resides in the chloroplast. Functionally, protein S19 forms a complex with S13 that binds strongly to the 16S ribosomal RNA. The polypeptide is Small ribosomal subunit protein uS19c (rps19) (Pisum sativum (Garden pea)).